A 316-amino-acid chain; its full sequence is Ribosomal RNA small subunit methyltransferase H (316 aa).

Residues 35–37 (GGH), D55, F79, D101, and Q108 each bind S-adenosyl-L-methionine.

This sequence belongs to the methyltransferase superfamily. RsmH family.

The protein localises to the cytoplasm. The enzyme catalyses cytidine(1402) in 16S rRNA + S-adenosyl-L-methionine = N(4)-methylcytidine(1402) in 16S rRNA + S-adenosyl-L-homocysteine + H(+). Specifically methylates the N4 position of cytidine in position 1402 (C1402) of 16S rRNA. This chain is Ribosomal RNA small subunit methyltransferase H, found in Vibrio parahaemolyticus serotype O3:K6 (strain RIMD 2210633).